A 314-amino-acid polypeptide reads, in one-letter code: DNA oxidative demethylase ALKBH2 (314 aa).

A compositionally biased stretch (polar residues) spans 1 to 28 (MTNPLNSTAANRSNQPSSDGISDGQITN). A disordered region spans residues 1 to 75 (MTNPLNSTAA…KRFHYHQDQR (75 aa)). A compositionally biased stretch (basic and acidic residues) spans 57–75 (NGKDDSDTKKRFHYHQDQR). Substrate-binding positions include Trp132 and 160-163 (ALVY). In terms of domain architecture, Fe2OG dioxygenase spans 194 to 314 (RFNSLLLNRY…RINLTFRLVL (121 aa)). 201-203 (NRY) contributes to the 2-oxoglutarate binding site. His213 and Asp215 together coordinate Fe cation. Substrate is bound at residue Asp216. A disordered region spans residues 242-271 (KKDEESSQGKTGDSGPAKKRLKRSSREDQQ). His293 serves as a coordination point for Fe cation. Residues Arg305 and 305-311 (RINLTFR) contribute to the 2-oxoglutarate site.

This sequence belongs to the alkB family. The cofactor is Fe(2+). In terms of tissue distribution, expressed ubiquitously, including in seedlings, leaves and flowers.

Its subcellular location is the nucleus. It carries out the reaction a methylated nucleobase within DNA + 2-oxoglutarate + O2 = a nucleobase within DNA + formaldehyde + succinate + CO2. Its function is as follows. Dioxygenase that repairs alkylated DNA containing 1-methyladenine and 1-ethenoadenine by oxidative demethylation. Accepts double-stranded and single-stranded substrates, with a preference for dsDNA over ssDNA. Confers resistance to methylating agents such as methylmethanesulphonate (MMS). In Arabidopsis thaliana (Mouse-ear cress), this protein is DNA oxidative demethylase ALKBH2 (ALKBH2).